We begin with the raw amino-acid sequence, 319 residues long: Insulin gene enhancer protein ISL-2 (319 aa).

LIM zinc-binding domains are found at residues 1–43 (FLLR…CKRD) and 52–106 (CAQC…RADH). Disordered regions lie at residues 106–151 (HGPP…EKTT), 218–237 (QQHS…LVAG), and 286–319 (ESGS…PAET). The segment at residues 150-209 (TTRVRTVLNEKQLHTLRTCYAANPRPDALMKEQLVEMTGLSPRVIRVWFQNKRCKDKKKS) is a DNA-binding region (homeobox). Over residues 218 to 230 (QQHSDKTSLQGLT) the composition is skewed to polar residues. Residues 286-303 (ESGSLGTSSGSDVTSLSS) show a composition bias toward low complexity. A compositionally biased stretch (polar residues) spans 304–319 (QLPDTPNSMVPSPAET).

It is found in the nucleus. In terms of biological role, transcriptional factor that defines subclasses of motoneurons that segregate into columns in the spinal cord and select distinct axon pathways. Acts in conjunction with LIM-1, LIM-3 and ISL-1. This is Insulin gene enhancer protein ISL-2 (ISL2) from Gallus gallus (Chicken).